The following is a 104-amino-acid chain: Large ribosomal subunit protein bL21 (104 aa).

The protein belongs to the bacterial ribosomal protein bL21 family. Part of the 50S ribosomal subunit. Contacts protein L20.

This protein binds to 23S rRNA in the presence of protein L20. The polypeptide is Large ribosomal subunit protein bL21 (Gluconacetobacter diazotrophicus (strain ATCC 49037 / DSM 5601 / CCUG 37298 / CIP 103539 / LMG 7603 / PAl5)).